The chain runs to 217 residues: MKFFVDTAETAEIAELAEAGLVDGVTTNPSLIAKSGRNFLEVVKEICDLVEGPVSAEVTALEAPAMIAEGKKLALLADNVVVKLPLTFEGLKACQALTAENIQTNVTLCFSANQGLLAAKAGATYVSPFIGRLDDLGVDGMELIANLRMIFDNYAFDTQILAASIRSADHIQQCALLGADVATAPPSVLKGLVKHQLTDKGLEAFMADWQKTGQSIL.

Residue lysine 83 is the Schiff-base intermediate with substrate of the active site.

The protein belongs to the transaldolase family. Type 3B subfamily.

The protein resides in the cytoplasm. The enzyme catalyses D-sedoheptulose 7-phosphate + D-glyceraldehyde 3-phosphate = D-erythrose 4-phosphate + beta-D-fructose 6-phosphate. The protein operates within carbohydrate degradation; pentose phosphate pathway; D-glyceraldehyde 3-phosphate and beta-D-fructose 6-phosphate from D-ribose 5-phosphate and D-xylulose 5-phosphate (non-oxidative stage): step 2/3. Its function is as follows. Transaldolase is important for the balance of metabolites in the pentose-phosphate pathway. This chain is Probable transaldolase, found in Maricaulis maris (strain MCS10) (Caulobacter maris).